A 271-amino-acid chain; its full sequence is Small ribosomal subunit protein uS3 (271 aa).

The KH type-2 domain maps to 40–108; it reads IRKFLKKRLY…TIIVNIVEVR (69 aa). The tract at residues 210 to 271 is disordered; sequence PTRDGVNPRE…RPQRTENKGN (62 aa). Positions 215 to 247 are enriched in basic and acidic residues; that stretch reads VNPREESRKSDRRDNKRDNRRNDRRGNDRRGND.

Belongs to the universal ribosomal protein uS3 family. As to quaternary structure, part of the 30S ribosomal subunit. Forms a tight complex with proteins S10 and S14.

In terms of biological role, binds the lower part of the 30S subunit head. Binds mRNA in the 70S ribosome, positioning it for translation. The chain is Small ribosomal subunit protein uS3 from Clostridioides difficile (strain 630) (Peptoclostridium difficile).